The primary structure comprises 206 residues: Thymidylate kinase (206 aa).

14–21 (GGEGIGKS) is an ATP binding site.

It belongs to the thymidylate kinase family.

The enzyme catalyses dTMP + ATP = dTDP + ADP. In terms of biological role, phosphorylation of dTMP to form dTDP in both de novo and salvage pathways of dTTP synthesis. The chain is Thymidylate kinase from Rickettsia bellii (strain OSU 85-389).